We begin with the raw amino-acid sequence, 62 residues long: UPF0339 protein Atu5359 (62 aa).

The protein belongs to the UPF0339 family.

This Agrobacterium fabrum (strain C58 / ATCC 33970) (Agrobacterium tumefaciens (strain C58)) protein is UPF0339 protein Atu5359.